The primary structure comprises 330 residues: D-alanine--D-alanine ligase (330 aa).

One can recognise an ATP-grasp domain in the interval 120 to 326 (KLWYDALGIP…FKTFLQKAVL (207 aa)). Position 150–205 (150–205 (AFKQWGGLFVKAACQGSSVGCYKVTSEEELAQAINGAFGYSQQVLVEKAVKPRELE)) interacts with ATP. Residues Asp280, Glu293, and Asn295 each contribute to the Mg(2+) site.

Belongs to the D-alanine--D-alanine ligase family. Mg(2+) is required as a cofactor. Requires Mn(2+) as cofactor.

It is found in the cytoplasm. It catalyses the reaction 2 D-alanine + ATP = D-alanyl-D-alanine + ADP + phosphate + H(+). It participates in cell wall biogenesis; peptidoglycan biosynthesis. Functionally, cell wall formation. This Aliivibrio fischeri (strain MJ11) (Vibrio fischeri) protein is D-alanine--D-alanine ligase.